Reading from the N-terminus, the 537-residue chain is CTP synthase (537 aa).

Positions 1–268 (MSFKCIFLTG…STFITEKLGL (268 aa)) are amidoligase domain. Residue serine 14 participates in CTP binding. Position 14 (serine 14) interacts with UTP. 15–20 (SLGKGL) contributes to the ATP binding site. Residue tyrosine 55 participates in L-glutamine binding. Residue aspartate 72 participates in ATP binding. Positions 72 and 142 each coordinate Mg(2+). CTP is bound by residues 149 to 151 (DIE), 188 to 193 (KTKPTQ), and lysine 224. UTP-binding positions include 188–193 (KTKPTQ) and lysine 224. Residues 294-533 (RLGLVGKYVQ…IEAALLHSRN (240 aa)) enclose the Glutamine amidotransferase type-1 domain. An L-glutamine-binding site is contributed by glycine 353. Cysteine 380 acts as the Nucleophile; for glutamine hydrolysis in catalysis. Residues 381–384 (LGMQ), glutamate 404, and arginine 461 each bind L-glutamine. Residues histidine 506 and glutamate 508 contribute to the active site.

The protein belongs to the CTP synthase family. Homotetramer.

It carries out the reaction UTP + L-glutamine + ATP + H2O = CTP + L-glutamate + ADP + phosphate + 2 H(+). The catalysed reaction is L-glutamine + H2O = L-glutamate + NH4(+). The enzyme catalyses UTP + NH4(+) + ATP = CTP + ADP + phosphate + 2 H(+). It functions in the pathway pyrimidine metabolism; CTP biosynthesis via de novo pathway; CTP from UDP: step 2/2. Allosterically activated by GTP, when glutamine is the substrate; GTP has no effect on the reaction when ammonia is the substrate. The allosteric effector GTP functions by stabilizing the protein conformation that binds the tetrahedral intermediate(s) formed during glutamine hydrolysis. Inhibited by the product CTP, via allosteric rather than competitive inhibition. Functionally, catalyzes the ATP-dependent amination of UTP to CTP with either L-glutamine or ammonia as the source of nitrogen. Regulates intracellular CTP levels through interactions with the four ribonucleotide triphosphates. In Chlamydia abortus (strain DSM 27085 / S26/3) (Chlamydophila abortus), this protein is CTP synthase.